Consider the following 42-residue polypeptide: Aryl-alcohol dehydrogenase (42 aa).

This sequence belongs to the zinc-containing alcohol dehydrogenase family. In terms of assembly, homodimer. It depends on Zn(2+) as a cofactor.

It catalyses the reaction an aromatic primary alcohol + NAD(+) = an aromatic aldehyde + NADH + H(+). Functionally, oxidizes primary alcohols with an aromatic or cyclohex-1-ene ring. It is highly specific for benzyl alcohol. The polypeptide is Aryl-alcohol dehydrogenase (Acinetobacter guillouiae (Acinetobacter genomosp. 11)).